A 247-amino-acid chain; its full sequence is PF03932 family protein CutC (247 aa).

This sequence belongs to the CutC family.

The protein resides in the cytoplasm. The chain is PF03932 family protein CutC from Vibrio campbellii (strain ATCC BAA-1116).